Here is a 236-residue protein sequence, read N- to C-terminus: MGQKINPIGLRLGVNQTWSSRWYADSGEYGRLLHEDLKIRSYVMEELKQAAISKVIIERPHKKCRVTIHSARPGLIIGKKGADIEKLRHQLSEMTNAETSLNIVEIRKPEIDATIIAQSVAQQLERRVAFRRAMKRAVQSAMRLGAEGIRINCSGRLGGAEIARMEWYREGRVPLHTLRADVDYSTAEARTAYGVCGVKVWVFKGEILEHDPMASEHRATRNDNSSSSLNRRRESV.

The region spanning 39-107 (IRSYVMEELK…ETSLNIVEIR (69 aa)) is the KH type-2 domain. The disordered stretch occupies residues 214-236 (ASEHRATRNDNSSSSLNRRRESV).

This sequence belongs to the universal ribosomal protein uS3 family. As to quaternary structure, part of the 30S ribosomal subunit. Forms a tight complex with proteins S10 and S14.

Its function is as follows. Binds the lower part of the 30S subunit head. Binds mRNA in the 70S ribosome, positioning it for translation. The protein is Small ribosomal subunit protein uS3 of Bartonella bacilliformis (strain ATCC 35685 / KC583 / Herrer 020/F12,63).